The following is a 775-amino-acid chain: Endothelin-converting enzyme-like 1 (775 aa).

At M1 to C61 the chain is on the cytoplasmic side. Positions G30 to L52 are disordered. The span at S32–L52 shows a compositional bias: low complexity. The chain crosses the membrane as a helical; Signal-anchor for type II membrane protein span at residues L62–L82. Topologically, residues K83–W775 are lumenal. The 677-residue stretch at G99 to W775 folds into the Peptidase M13 domain. Intrachain disulfides connect C124/C760, C132/C720, C188/C441, and C649/C772. N255 and N322 each carry an N-linked (GlcNAc...) asparagine glycan. H612 is a binding site for Zn(2+). E613 is an active-site residue. H616 provides a ligand contact to Zn(2+). N656 is a glycosylation site (N-linked (GlcNAc...) asparagine). A Zn(2+)-binding site is contributed by E672. Catalysis depends on D676, which acts as the Proton donor.

The protein belongs to the peptidase M13 family. It depends on Zn(2+) as a cofactor.

The protein localises to the membrane. May contribute to the degradation of peptide hormones and be involved in the inactivation of neuronal peptides. The polypeptide is Endothelin-converting enzyme-like 1 (Ecel1) (Mus musculus (Mouse)).